The chain runs to 1013 residues: Endosome/lysosome-associated apoptosis and autophagy regulator 1 (1013 aa).

Residues M1 to G41 form the signal peptide. The Extracellular segment spans residues T42–K910. N153 carries an N-linked (GlcNAc...) asparagine glycan. 3 cysteine pairs are disulfide-bonded: C278-C295, C308-C330, and C311-C342. N-linked (GlcNAc...) asparagine glycans are attached at residues N404 and N672. The MRH domain maps to N656 to L858. 4 disulfides stabilise this stretch: C658–C704, C714–C739, C808–C844, and C820–C856. Residues V911 to W931 traverse the membrane as a helical segment. Residues K932 to L1013 lie on the Cytoplasmic side of the membrane.

The protein belongs to the ELAPOR family. As to quaternary structure, interacts with HSPA5; may regulate the function of HSPA5 in apoptosis and cell proliferation. As to expression, expressed in normal endometrium but overexpressed in endometroid tumors.

The protein resides in the cell membrane. It is found in the late endosome membrane. It localises to the golgi apparatus. Its subcellular location is the trans-Golgi network membrane. The protein localises to the lysosome membrane. The protein resides in the endoplasmic reticulum membrane. Its function is as follows. May protect cells from cell death by inducing cytosolic vacuolization and up-regulating the autophagy pathway. May play a role in apoptosis and cell proliferation through its interaction with HSPA5. The sequence is that of Endosome/lysosome-associated apoptosis and autophagy regulator 1 from Homo sapiens (Human).